A 748-amino-acid polypeptide reads, in one-letter code: Catalase-peroxidase (748 aa).

Positions 91-242 (WHSAGTYRIG…LAAVQMGLIY (152 aa)) form a cross-link, tryptophyl-tyrosyl-methioninium (Trp-Tyr) (with M-268). The active-site Proton acceptor is histidine 92. The interval 194–223 (DRYGKGKGSSSQGEIPADAHRHGQEQARTA) is disordered. A cross-link (tryptophyl-tyrosyl-methioninium (Tyr-Met) (with W-91)) is located at residues 242 to 268 (YVNPEGPEGNPDPLAAAHDIRETFARM). Residue histidine 283 coordinates heme b. Residues 288–310 (THGAGDAKHVGREPEGEDMDSQG) form a disordered region. The span at 290-301 (GAGDAKHVGREP) shows a compositional bias: basic and acidic residues.

This sequence belongs to the peroxidase family. Peroxidase/catalase subfamily. Homodimer or homotetramer. Requires heme b as cofactor. Post-translationally, formation of the three residue Trp-Tyr-Met cross-link is important for the catalase, but not the peroxidase activity of the enzyme.

The enzyme catalyses H2O2 + AH2 = A + 2 H2O. It catalyses the reaction 2 H2O2 = O2 + 2 H2O. Bifunctional enzyme with both catalase and broad-spectrum peroxidase activity. The chain is Catalase-peroxidase from Herbaspirillum seropedicae.